The sequence spans 432 residues: MTNASTESFFNRSLADVDPEIFGAIGKELGRQRHEIELIASENIVSRAVLEAQGSIMTNKYAEGYPGKRYYGGCQFVDIAEELAIERAKKLFGVNFANVQPNSGSQMNQAVFLALLQPGDTFMGLDLNSGGHLTHGSPVNMSGKWFNVVSYGVREGDNLLDMDEVARKAEEHKPKVIIAGGTAYSRIWDWKRFREIADSVGAYLMVDMAHIAGLVAGGQHPSPFPHCHVATTTTHKSLRGPRGGVILTNEEDLAKKFNSAVFPGLQGGPLMHIIAAKAVAFGEALQPEFKEYAAQIVKNARALAETLIAGGLDVVSGGTDNHLMLVDLRKKNATGKRAEAALGRAYITCNKNGIPFDPEKPFVTSGVRLGAPAGTTRGFKEAEFREIGNLIVEVLDGLKVANSDDGNAAVEAAVRGKVVNLTDRFPMYDYMG.

(6S)-5,6,7,8-tetrahydrofolate is bound by residues Leu-127 and Gly-131–Leu-133. Lys-236 carries the N6-(pyridoxal phosphate)lysine modification.

This sequence belongs to the SHMT family. Homodimer. Pyridoxal 5'-phosphate is required as a cofactor.

It is found in the cytoplasm. The catalysed reaction is (6R)-5,10-methylene-5,6,7,8-tetrahydrofolate + glycine + H2O = (6S)-5,6,7,8-tetrahydrofolate + L-serine. The protein operates within one-carbon metabolism; tetrahydrofolate interconversion. Its pathway is amino-acid biosynthesis; glycine biosynthesis; glycine from L-serine: step 1/1. Functionally, catalyzes the reversible interconversion of serine and glycine with tetrahydrofolate (THF) serving as the one-carbon carrier. This reaction serves as the major source of one-carbon groups required for the biosynthesis of purines, thymidylate, methionine, and other important biomolecules. Also exhibits THF-independent aldolase activity toward beta-hydroxyamino acids, producing glycine and aldehydes, via a retro-aldol mechanism. In Rhizobium etli (strain ATCC 51251 / DSM 11541 / JCM 21823 / NBRC 15573 / CFN 42), this protein is Serine hydroxymethyltransferase.